Reading from the N-terminus, the 286-residue chain is Small ribosomal subunit protein uS3 (286 aa).

A KH type-2 domain is found at 39–107 (VREYLKKKLA…PVHVNIEEIR (69 aa)). Residues 213–286 (QAGAGTAAPQ…KPGVNDAAAS (74 aa)) are disordered. A compositionally biased stretch (basic and acidic residues) spans 241-262 (GRADARSDGKAGEKKGPRKSDN).

Belongs to the universal ribosomal protein uS3 family. In terms of assembly, part of the 30S ribosomal subunit. Forms a tight complex with proteins S10 and S14.

Functionally, binds the lower part of the 30S subunit head. Binds mRNA in the 70S ribosome, positioning it for translation. This chain is Small ribosomal subunit protein uS3, found in Nitrosospira multiformis (strain ATCC 25196 / NCIMB 11849 / C 71).